The following is a 598-amino-acid chain: Nuclear receptor subfamily 4 group A member 2 (598 aa).

The tract at residues 1-22 is disordered; it reads MPCVQAQYGSSPQGASPASQSY. Residues 8 to 22 show a composition bias toward low complexity; sequence YGSSPQGASPASQSY. A DNA-binding region (nuclear receptor) is located at residues 260-335; sequence EGLCAVCGDN…VGMVKEVVRT (76 aa). NR C4-type zinc fingers lie at residues 263 to 283 and 299 to 318; these read CAVC…CEGC and CLAN…CQYC. The short motif at 287–314 is the Bipartite nuclear localization signal (NLS1) element; the sequence is FKRTVQKNAKYVCLANKNCPVDKRRRNR. The segment at 337–361 is disordered; the sequence is SLKGRRGRLPSKPKSPQEPSPPSPP. A Nuclear localization signal (NLS1) motif is present at residues 338–350; that stretch reads LKGRRGRLPSKPK. The span at 352–361 shows a compositional bias: pro residues; the sequence is PQEPSPPSPP. The NR LBD domain occupies 360–595; that stretch reads PPVSLISALV…AIIDKLFLDT (236 aa). The short motif at 443–452 is the nuclear export sequence (NES1) element; that stretch reads FLELFVLRLA. Residues 568–577 carry the nuclear export sequence (NES2) motif; that stretch reads QGLQRIFYLK.

It belongs to the nuclear hormone receptor family. NR4 subfamily. Interacts with SFPQ, NCOR2, SIN3A and HADC1. The interaction with NCOR2 increases in the absence of PITX3. Interacts with PER2.

The protein localises to the cytoplasm. Its subcellular location is the nucleus. In terms of biological role, transcriptional regulator which is important for the differentiation and maintenance of meso-diencephalic dopaminergic (mdDA) neurons during development. It is crucial for expression of a set of genes such as SLC6A3, SLC18A2, TH and DRD2 which are essential for development of mdDA neurons. This Bos taurus (Bovine) protein is Nuclear receptor subfamily 4 group A member 2 (NR4A2).